Consider the following 232-residue polypeptide: 2,3-bisphosphoglycerate-dependent phosphoglycerate mutase (232 aa).

Residues 10–17 (RHGESIWN), 23–24 (TG), Arg-62, 89–92 (ERHY), Lys-100, 116–117 (RR), and 185–186 (GN) contribute to the substrate site. The active-site Tele-phosphohistidine intermediate is the His-11. Catalysis depends on Glu-89, which acts as the Proton donor/acceptor.

Belongs to the phosphoglycerate mutase family. BPG-dependent PGAM subfamily. In terms of assembly, homodimer.

The enzyme catalyses (2R)-2-phosphoglycerate = (2R)-3-phosphoglycerate. It functions in the pathway carbohydrate degradation; glycolysis; pyruvate from D-glyceraldehyde 3-phosphate: step 3/5. Catalyzes the interconversion of 2-phosphoglycerate and 3-phosphoglycerate. The sequence is that of 2,3-bisphosphoglycerate-dependent phosphoglycerate mutase from Buchnera aphidicola subsp. Baizongia pistaciae (strain Bp).